The sequence spans 233 residues: Probable septum site-determining protein MinC (233 aa).

It belongs to the MinC family. As to quaternary structure, interacts with MinD and FtsZ.

Its function is as follows. Cell division inhibitor that blocks the formation of polar Z ring septums. Rapidly oscillates between the poles of the cell to destabilize FtsZ filaments that have formed before they mature into polar Z rings. Prevents FtsZ polymerization. The polypeptide is Probable septum site-determining protein MinC (Proteus mirabilis (strain HI4320)).